A 462-amino-acid chain; its full sequence is Probable threonine/serine transporter YbxG (462 aa).

12 consecutive transmembrane segments (helical) span residues 17–37 (MIALGGTIGVGLFMGSASTIS), 38–58 (WTGPSVLLAYAICGIFIFFIM), 89–109 (ITAWSNWFQWIIVGMSEIIAV), 121–141 (PAWIPGIVAMVILGAANLISV), 154–174 (IKIVTIILMIIAGIGIIFFGF), 190–210 (GGFFAGGFSGFFFALSLVIAA), 238–258 (IIWRILIFYIGAIFVIVTVYP), 276–296 (IGITAAAGIINFVVITAAMSG), 331–351 (LYGTIAVLIGLAVGVVLNYIA), 355–375 (IFVYVYSASVLPGMIPWFIIL), 398–418 (FAPFTNYLTIAFLLMVLVGMW), and 427–447 (LIVGVIFLALVVISYYVFGIG).

This sequence belongs to the amino acid-polyamine-organocation (APC) superfamily.

It localises to the cell membrane. Its function is as follows. Probable threonine transporter. Is also active as a minor serine permease. The polypeptide is Probable threonine/serine transporter YbxG (ybxG) (Bacillus subtilis (strain 168)).